The chain runs to 367 residues: Cell-death-related nuclease 7 (367 aa).

A signal peptide spans methionine 1–glycine 18. A glycan (N-linked (GlcNAc...) asparagine) is linked at asparagine 253.

Belongs to the DNase II family.

The sequence is that of Cell-death-related nuclease 7 (crn-7) from Caenorhabditis elegans.